The primary structure comprises 35 residues: Sperm protamine alpha isoform 2 (35 aa).

The tract at residues 1–35 is disordered; it reads MPRRRRRASRPIRRRRRARRSTAVRRRRRVVRRRR. Residues Ser-9 and Ser-21 each carry the phosphoserine modification.

Phosphorylated in immature sperm. Dephosphorylated in mature sperm allowing a stronger interaction with DNA. In terms of tissue distribution, gonads.

It is found in the nucleus. The protein localises to the chromosome. Protamines substitute for histones in the chromatin of sperm during the haploid phase of spermatogenesis. They compact sperm DNA into a highly condensed, stable and inactive complex. The polypeptide is Sperm protamine alpha isoform 2 (Scomber scombrus (Atlantic mackerel)).